Here is a 417-residue protein sequence, read N- to C-terminus: 4-hydroxy-3-methylbut-2-en-1-yl diphosphate synthase (flavodoxin) (417 aa).

The [4Fe-4S] cluster site is built by Cys-307, Cys-310, Cys-353, and Glu-360.

Belongs to the IspG family. Requires [4Fe-4S] cluster as cofactor.

The enzyme catalyses (2E)-4-hydroxy-3-methylbut-2-enyl diphosphate + oxidized [flavodoxin] + H2O + 2 H(+) = 2-C-methyl-D-erythritol 2,4-cyclic diphosphate + reduced [flavodoxin]. It functions in the pathway isoprenoid biosynthesis; isopentenyl diphosphate biosynthesis via DXP pathway; isopentenyl diphosphate from 1-deoxy-D-xylulose 5-phosphate: step 5/6. Converts 2C-methyl-D-erythritol 2,4-cyclodiphosphate (ME-2,4cPP) into 1-hydroxy-2-methyl-2-(E)-butenyl 4-diphosphate. This is 4-hydroxy-3-methylbut-2-en-1-yl diphosphate synthase (flavodoxin) from Xylella fastidiosa (strain 9a5c).